We begin with the raw amino-acid sequence, 128 residues long: Holin-like protein CidA (128 aa).

The next 4 helical transmembrane spans lie at 4-24, 27-46, 59-79, and 88-108; these read LLLT…INWV, ALHI…FTLL, GAAW…VGVI, and FGVS…VSTG.

Belongs to the CidA/LrgA family. CidA subfamily.

Its subcellular location is the cell membrane. Its function is as follows. Increases the activity of extracellular murein hydrolases possibly by mediating their export via hole formation. Inhibited by the antiholin-like proteins LrgAB. In an unstressed cell, the LrgAB products probably inhibit the function of the CidA protein. When a cell is stressed by the addition of antibiotics or by other factors in the environment, CidA possibly oligomerizes within the bacterial cell membrane, creating lesions that disrupt the proton motive force, which in turn results in loss of cell viability. These lesions are also hypothesized to regulate the subsequent cell lysis by either allowing the murein hydrolases access to the cell wall substrate and/or regulating their activity by a possible change in the cell wall pH that results from loss of membrane potential. The polypeptide is Holin-like protein CidA (Bacillus velezensis (strain DSM 23117 / BGSC 10A6 / LMG 26770 / FZB42) (Bacillus amyloliquefaciens subsp. plantarum)).